The chain runs to 162 residues: MEIRVPVQPSWLRRASAPLPGFSTPGRLFDQRFGEGLLEAELASLCPAAIAPYYLRAPSVALPTAQVPTDPGYFSVLLDVKHFSPEEISVKVVGDHVEVHARHEERPDEHGFIAREFHRRYRLPPGVDPAAVTSALSPEGVLSIQATPASAQASLPSPPAAK.

Positions 1-72 (MEIRVPVQPS…PTAQVPTDPG (72 aa)) are involved in stabilization of the HSPB1:HSBP6 heterodimer. Phosphoserine is present on Ser-16. Residue Gln-31 forms an Isoglutamyl lysine isopeptide (Gln-Lys) (interchain with K-162) linkage. A sHSP domain is found at 56–162 (RAPSVALPTA…ASLPSPPAAK (107 aa)). Gln-66 carries the post-translational modification Deamidated glutamine. Ser-157 carries the post-translational modification Phosphoserine. Residue Lys-162 forms an Isoglutamyl lysine isopeptide (Lys-Gln) (interchain with Q-31) linkage.

Belongs to the small heat shock protein (HSP20) family. In terms of assembly, homodimer. Small heat shock proteins form high molecular mass oligomers containing variable number of monomers; these oligomers display a very flexible quaternary structure easily exchanging their subunits. Heterooligomer with HSPB1; formed through oligomerization of HSPB1:HSBP6 dimers; subunit exchange leads to formation of at least two different heterooligomeric complexes, differing in variable quantities of HSPB1 and HSPB6 homodimers in addition to HSPB1:HSPB6 heterodimers. Heterooligomer with CRYAB; large heterooligomers consist of CRYAB homodimers and HSPB5:HSPB6 heterodimers but lacking HSPB6 homodimers. Interacts with BAG3. Interacts (phosphorylated) with YWHAZ. Interacts with PDE4A and PDE4D; required for maintenance of the non-phosphorylated state of HSPB6 under basal conditions. Interacts with KDR. Interacts with PRKD1. The N-terminus is blocked. Post-translationally, phosphorylated at Ser-16 by PKA and probably PKD1K; required to protect cardiomyocytes from apoptosis. As to expression, widely expressed. High expression in muscle tissues.

Its subcellular location is the cytoplasm. The protein localises to the nucleus. It is found in the secreted. Small heat shock protein which functions as a molecular chaperone probably maintaining denatured proteins in a folding-competent state. Seems to have versatile functions in various biological processes. Plays a role in regulating muscle function such as smooth muscle vasorelaxation and cardiac myocyte contractility. May regulate myocardial angiogenesis implicating KDR. Overexpression mediates cardioprotection and angiogenesis after induced damage. Stabilizes monomeric YWHAZ thereby supporting YWHAZ chaperone-like activity. In Rattus norvegicus (Rat), this protein is Heat shock protein beta-6 (Hspb6).